A 110-amino-acid chain; its full sequence is MMEEERFKAEIFHVTQEVCNRTASELTESESRNVIVDELFCVGVTEMVWEQIRVLAKDIEAFAEHAGRKTVQPQDVLLCCRRNEGLYEIINNFHKESIKSKKKKKENSTT.

It belongs to the TAF9 family. CENP-S/MHF1 subfamily. As to quaternary structure, the MHF histone-fold complex is a heterotetramer of 2 mhf1-mhf2 heterodimers. Component of the inner kinetochore constitutive centromere-associated network (CCAN) (also known as central kinetochore Sim4 complex in fission yeast), which is composed of at least cnl2, cnp3, cnp20, fta1, fta2, fta3, fta4, fta6, fta7, mal2, mhf1, mhf2, mis6, mis15, mis17, sim4 and wip1.

It localises to the nucleus. Its function is as follows. Component of a FANCM-MHF complex that promotes gene conversion at blocked replication forks, probably by reversal of the stalled fork. FANCM-MHF promotes non-crossover recombination. The sequence is that of Inner kinetochore subunit mhf1 from Schizosaccharomyces pombe (strain 972 / ATCC 24843) (Fission yeast).